The chain runs to 266 residues: Inositol-1-monophosphatase (266 aa).

Positions 69, 86, 88, and 89 each coordinate Mg(2+). Glu69 provides a ligand contact to substrate. Residues Leu88–Thr91, Arg185, and Asp214 each bind substrate. Residue Asp214 coordinates Mg(2+).

Belongs to the inositol monophosphatase superfamily. Mg(2+) is required as a cofactor.

It catalyses the reaction a myo-inositol phosphate + H2O = myo-inositol + phosphate. The sequence is that of Inositol-1-monophosphatase (suhB) from Rhizobium meliloti (strain 1021) (Ensifer meliloti).